The primary structure comprises 129 residues: Large ribosomal subunit protein eL32 (129 aa).

This sequence belongs to the eukaryotic ribosomal protein eL32 family.

This is Large ribosomal subunit protein eL32 (rpl32e) from Methanosarcina acetivorans (strain ATCC 35395 / DSM 2834 / JCM 12185 / C2A).